A 99-amino-acid chain; its full sequence is uncharacterized protein (99 aa).

Helical transmembrane passes span 7–29 (FFIS…YTLY), 39–61 (FISS…ARYN), and 68–90 (FCNL…LWLL).

Its subcellular location is the cell membrane. This is an uncharacterized protein from Archaeoglobus fulgidus (strain ATCC 49558 / DSM 4304 / JCM 9628 / NBRC 100126 / VC-16).